The primary structure comprises 321 residues: p-hydroxybenzoic acid efflux pump subunit AaeA (321 aa).

Residues 22-42 (VVITLVIVLCAIVAIFRVWAF) form a helical membrane-spanning segment.

Belongs to the membrane fusion protein (MFP) (TC 8.A.1) family.

The protein resides in the cell inner membrane. Functionally, forms an efflux pump with AaeB. This chain is p-hydroxybenzoic acid efflux pump subunit AaeA, found in Pectobacterium atrosepticum (strain SCRI 1043 / ATCC BAA-672) (Erwinia carotovora subsp. atroseptica).